Reading from the N-terminus, the 344-residue chain is Short chain dehydrogenase/reductase mfmJ (344 aa).

The NADP(+) site is built by Leu51, Lys76, Asp99, Asn126, Tyr213, and Lys217. The Proton donor role is filled by Tyr213. Catalysis depends on Lys217, which acts as the Lowers pKa of active site Tyr.

It belongs to the short-chain dehydrogenases/reductases (SDR) family.

In terms of biological role, short chain dehydrogenase/reductase; part of the gene cluster that mediates the biosynthesis of the phthalide-terpenoid hybrid 11'-O-desmethylfendlerol. MfmJ seems not to be involved directly in the biosynthesis of 11'-O-desmethylfendlerol and its role has still to be determined. The biosynthesis of 11'-O-desmethylfendlerol begins with the NR-PKS mfmB that forms 3,5-dimethylorsellinic acid (DMOA), which is then transformed into the phthalide 5,7-dihydroxy-4-(hydroxymethyl)-6-methylphthalide by the cytochrome P450 monooxygenase mfmA and the hydrolase mfmC. Subsequently, the methyltransferase mfmE catalyzes 7-O-methylation to yield 5-hydroxy-4-(hydroxymethyl)-7-methoxy-6-methylphthalide, which undergoes C-3 hydroxylation by the cytochrome P450 monooxygenase mfmF. The resultant cyclopolic acid (2,5-dihydroxy-4-(hydroxymethyl)-7-methoxy-6-methylphthalide) is then farnesylated by the DMATS-type prenyltransferase mfmD to afford 5-O-farnesylcyclopolic acid. Finally, the Pyr4-family terpene cyclase mfmH cyclizes the farnesyl moiety of 5-O-farnesylcyclopolic acid into a drimane-like structure, thus completing the biosynthesis of 11'-O-desmethylfendlerol. The chain is Short chain dehydrogenase/reductase mfmJ from Annulohypoxylon moriforme (Filamentous fungus).